We begin with the raw amino-acid sequence, 648 residues long: Penicillin-binding protein PbpB (648 aa).

Residues 1–35 (MSRRGDRPRTPAQPRKKARVDQPRSARTRRTRVSE) form a disordered region. Residues 52-72 (GNLAILAVLVIAAVQLFMLQV) form a helical membrane-spanning segment. S355 (acyl-ester intermediate) is an active-site residue.

It belongs to the transpeptidase family. As to quaternary structure, interacts with Wag31.

It is found in the cell membrane. In Mycolicibacterium smegmatis (strain ATCC 700084 / mc(2)155) (Mycobacterium smegmatis), this protein is Penicillin-binding protein PbpB (pbpB).